The primary structure comprises 443 residues: MKRRASERDAGETSARSKALCSSISGSNAKRAGPFILGPRLGNSPVPSIVQCLARKDGTDDFYQLKILSLEERGDKAGETQEERQGKMLLHTEYSLLSLLHNQDGVVHHHGLFQDRTCEIVEDLEANKLVRKMRKRICLVLDCLCAHDFSDKTADLINLQHYVIKEKRLGERETVVIFYDVVRVVEALHKKNIVHRDLKLGNMVLNKRTHRITVTNFCLGKHLVSEDDLLKDQRGSPAYISPDVLSGRPYRGKPSDMWALGVVLFTMLYGQFPFYDSIPQELFRKIKAAEYSIPEDGRVSESTVCLIRKLLVLDPQQRLTASEVLESLGAIISSWQSMSSLSGPLQVVPDIDHLTSLENSQEAKVTEESSQYEFENYMRQQLLLAEEKNTIHEAKNFPQKRHFGNFPPIRRLGYDAQPVSPLDAAILAQRYLPPPHMALSNSH.

Residues 1-11 are compositionally biased toward basic and acidic residues; it reads MKRRASERDAG. The tract at residues 1–26 is disordered; the sequence is MKRRASERDAGETSARSKALCSSISG. Positions 14–26 are enriched in polar residues; the sequence is SARSKALCSSISG. A Protein kinase domain is found at 35-332; that stretch reads FILGPRLGNS…EVLESLGAII (298 aa). ATP contacts are provided by residues 41–49 and Lys-66; that span reads LGNSPVPSI. The Proton acceptor role is filled by Asp-197.

This sequence belongs to the protein kinase superfamily. CAMK Ser/Thr protein kinase family.

The protein resides in the nucleus. The protein localises to the cytoplasm. The enzyme catalyses L-seryl-[protein] + ATP = O-phospho-L-seryl-[protein] + ADP + H(+). It catalyses the reaction L-threonyl-[protein] + ATP = O-phospho-L-threonyl-[protein] + ADP + H(+). Functionally, may be a negative regulator of NF-kappa-B and p53-mediated gene transcription. In Xenopus tropicalis (Western clawed frog), this protein is Serine/threonine-protein kinase 40 (stk40).